We begin with the raw amino-acid sequence, 119 residues long: UPF0102 protein FP2501 (119 aa).

The protein belongs to the UPF0102 family.

The protein is UPF0102 protein FP2501 of Flavobacterium psychrophilum (strain ATCC 49511 / DSM 21280 / CIP 103535 / JIP02/86).